Reading from the N-terminus, the 1247-residue chain is Lon protease homolog 2, peroxisomal (1247 aa).

The 381-residue stretch at Leu-22–Ile-402 folds into the Lon N-terminal domain. Disordered stretches follow at residues Ser-76–His-103, Thr-447–Asp-503, and Asp-626–Ser-655. The segment covering Pro-459 to Gly-477 has biased composition (low complexity). Over residues Asp-626–Lys-639 the composition is skewed to basic and acidic residues. Gly-721 to Thr-728 contacts ATP. The 242-residue stretch at Thr-989–Glu-1230 folds into the Lon proteolytic domain. Catalysis depends on residues Ser-1099 and Lys-1142.

This sequence belongs to the peptidase S16 family.

The protein resides in the peroxisome matrix. The enzyme catalyses Hydrolysis of proteins in presence of ATP.. In terms of biological role, ATP-dependent serine protease that mediates the selective degradation of misfolded and unassembled polypeptides in the peroxisomal matrix. Necessary for type 2 peroxisome targeting signal (PTS2)-containing protein processing and facilitates peroxisome matrix protein import. This Candida dubliniensis (strain CD36 / ATCC MYA-646 / CBS 7987 / NCPF 3949 / NRRL Y-17841) (Yeast) protein is Lon protease homolog 2, peroxisomal.